Reading from the N-terminus, the 197-residue chain is Imidazoleglycerol-phosphate dehydratase (197 aa).

This sequence belongs to the imidazoleglycerol-phosphate dehydratase family.

The protein resides in the cytoplasm. The enzyme catalyses D-erythro-1-(imidazol-4-yl)glycerol 3-phosphate = 3-(imidazol-4-yl)-2-oxopropyl phosphate + H2O. It functions in the pathway amino-acid biosynthesis; L-histidine biosynthesis; L-histidine from 5-phospho-alpha-D-ribose 1-diphosphate: step 6/9. This is Imidazoleglycerol-phosphate dehydratase from Rhodopseudomonas palustris (strain HaA2).